Consider the following 333-residue polypeptide: tRNA-dihydrouridine(16) synthase (333 aa).

Residues 19–21 and Q80 contribute to the FMN site; that span reads PMQ. Residue C110 is the Proton donor of the active site. FMN is bound by residues K151, 211–213, and 235–236; these read NGD and GR.

The protein belongs to the Dus family. DusC subfamily. It depends on FMN as a cofactor.

It carries out the reaction 5,6-dihydrouridine(16) in tRNA + NADP(+) = uridine(16) in tRNA + NADPH + H(+). The enzyme catalyses 5,6-dihydrouridine(16) in tRNA + NAD(+) = uridine(16) in tRNA + NADH + H(+). Its function is as follows. Catalyzes the synthesis of 5,6-dihydrouridine (D), a modified base found in the D-loop of most tRNAs, via the reduction of the C5-C6 double bond in target uridines. Specifically modifies U16 in tRNAs. In Neisseria meningitidis serogroup A / serotype 4A (strain DSM 15465 / Z2491), this protein is tRNA-dihydrouridine(16) synthase.